The sequence spans 163 residues: IQSTSMDQGILTEDSMNSFIRTLIQAGIWKNKVPKQTARTKDGTQTTVKKTEAEADAMVSKDTRLSFQPIVSVDAELLRQQRRFSSPRVLLSENTPLEPPPLYLTEEPTVLNRTSRRKREGKSHRGEYSVCDSESRWVTDKSSAVDIRGHQVTVLGEIRMGPS.

Residues 1-3 (IQS) form the signal peptide. A propeptide spanning residues 4 to 119 (TSMDQGILTE…VLNRTSRRKR (116 aa)) is cleaved from the precursor. Asn-112 is a glycosylation site (N-linked (GlcNAc...) asparagine).

The protein belongs to the NGF-beta family.

It localises to the secreted. Seems to promote the survival of visceral and proprioceptive sensory neurons. The polypeptide is Neurotrophin-3 (NTF3) (Eryx conicus (Rough-scaled sand boa)).